Here is a 123-residue protein sequence, read N- to C-terminus: Small ribosomal subunit protein uS12 (123 aa).

Aspartate 89 carries the post-translational modification 3-methylthioaspartic acid. The disordered stretch occupies residues 104–123; it reads TAGVKDRKQARSKYGAKRPK. Positions 113–123 are enriched in basic residues; it reads ARSKYGAKRPK.

This sequence belongs to the universal ribosomal protein uS12 family. In terms of assembly, part of the 30S ribosomal subunit. Contacts proteins S8 and S17. May interact with IF1 in the 30S initiation complex.

Its function is as follows. With S4 and S5 plays an important role in translational accuracy. In terms of biological role, interacts with and stabilizes bases of the 16S rRNA that are involved in tRNA selection in the A site and with the mRNA backbone. Located at the interface of the 30S and 50S subunits, it traverses the body of the 30S subunit contacting proteins on the other side and probably holding the rRNA structure together. The combined cluster of proteins S8, S12 and S17 appears to hold together the shoulder and platform of the 30S subunit. The sequence is that of Small ribosomal subunit protein uS12 from Neisseria meningitidis serogroup C (strain 053442).